The primary structure comprises 151 residues: Deoxyuridine 5'-triphosphate nucleotidohydrolase (151 aa).

Residues 71-73, Asn-84, and 88-90 each bind substrate; these read RSG and TID.

It belongs to the dUTPase family. The cofactor is Mg(2+).

It catalyses the reaction dUTP + H2O = dUMP + diphosphate + H(+). The protein operates within pyrimidine metabolism; dUMP biosynthesis; dUMP from dCTP (dUTP route): step 2/2. Functionally, this enzyme is involved in nucleotide metabolism: it produces dUMP, the immediate precursor of thymidine nucleotides and it decreases the intracellular concentration of dUTP so that uracil cannot be incorporated into DNA. The protein is Deoxyuridine 5'-triphosphate nucleotidohydrolase of Gluconobacter oxydans (strain 621H) (Gluconobacter suboxydans).